A 190-amino-acid chain; its full sequence is uncharacterized protein (190 aa).

The first 18 residues, 1-18 (MKLVHMASGLAVAIALAA), serve as a signal peptide directing secretion. Cys-19 carries the N-palmitoyl cysteine lipid modification. Cys-19 carries the S-diacylglycerol cysteine lipid modification. The span at 162–182 (ASGGATTTVPSTSPTQVNPSS) shows a compositional bias: low complexity. Positions 162–190 (ASGGATTTVPSTSPTQVNPSSAVPAPTQY) are disordered.

Its subcellular location is the cell membrane. This is an uncharacterized protein from Escherichia coli (strain K12).